We begin with the raw amino-acid sequence, 105 residues long: Transcriptional regulator SutA (105 aa).

Over residues 1 to 37 the composition is skewed to acidic residues; sequence MSEEELEQDELDGADEDDGEELAAADDGEADSSDGDE. Residues 1 to 105 form a disordered region; the sequence is MSEEELEQDE…PDSKYGSRPI (105 aa). Basic and acidic residues-rich tracts occupy residues 59–83 and 92–105; these read AKQK…KVQE and PPKK…SRPI.

Interacts with RNA polymerase.

Its function is as follows. Causes widespread changes in gene expression, and plays a direct role in the regulation of genes encoding ribosomal components. Associates with chromosomal DNA through interaction with RNA polymerase. Contributes to biofilm formation and secondary metabolite production. Important during transitions to and from the survival state. This is Transcriptional regulator SutA from Pseudomonas aeruginosa (strain UCBPP-PA14).